A 123-amino-acid polypeptide reads, in one-letter code: Ribosome-binding factor A (123 aa).

This sequence belongs to the RbfA family. Monomer. Binds 30S ribosomal subunits, but not 50S ribosomal subunits or 70S ribosomes.

It is found in the cytoplasm. In terms of biological role, one of several proteins that assist in the late maturation steps of the functional core of the 30S ribosomal subunit. Associates with free 30S ribosomal subunits (but not with 30S subunits that are part of 70S ribosomes or polysomes). Required for efficient processing of 16S rRNA. May interact with the 5'-terminal helix region of 16S rRNA. The polypeptide is Ribosome-binding factor A (Neisseria meningitidis serogroup B (strain ATCC BAA-335 / MC58)).